Here is a 210-residue protein sequence, read N- to C-terminus: Fibrillarin-like rRNA/tRNA 2'-O-methyltransferase (210 aa).

Residues 72 to 73 (TT), 88 to 89 (EF), 113 to 114 (DA), and 134 to 137 (DVAT) each bind S-adenosyl-L-methionine.

The protein belongs to the methyltransferase superfamily. Fibrillarin family. Interacts with nop5. Component of box C/D small ribonucleoprotein (sRNP) particles that contain rpl7ae, FlpA and nop5, plus a guide RNA.

Functionally, involved in pre-rRNA and tRNA processing. Utilizes the methyl donor S-adenosyl-L-methionine to catalyze the site-specific 2'-hydroxyl methylation of ribose moieties in rRNA and tRNA. Site specificity is provided by a guide RNA that base pairs with the substrate. Methylation occurs at a characteristic distance from the sequence involved in base pairing with the guide RNA. The protein is Fibrillarin-like rRNA/tRNA 2'-O-methyltransferase of Halobacterium salinarum (strain ATCC 29341 / DSM 671 / R1).